We begin with the raw amino-acid sequence, 147 residues long: Prefoldin subunit alpha (147 aa).

The protein belongs to the prefoldin alpha subunit family. As to quaternary structure, heterohexamer of two alpha and four beta subunits.

Its subcellular location is the cytoplasm. In terms of biological role, molecular chaperone capable of stabilizing a range of proteins. Seems to fulfill an ATP-independent, HSP70-like function in archaeal de novo protein folding. This chain is Prefoldin subunit alpha, found in Saccharolobus islandicus (strain M.16.27) (Sulfolobus islandicus).